We begin with the raw amino-acid sequence, 61 residues long: Truncated Cytokine response-modifying protein B (61 aa).

The protein is truncated in this strain and presumably inactive. It has similarities with variola virus CrmB, but the product is inactivated due to several premature stop codon. This is Truncated Cytokine response-modifying protein B from Bos taurus (Bovine).